The following is a 759-amino-acid chain: ARF GTPase-activating protein GIT2 (759 aa).

Residues 1 to 124 (MSKRLRSSEV…AFVHRLPCRD (124 aa)) form the Arf-GAP domain. The C4-type zinc finger occupies 11–34 (CADCSGPDPSWASVNRGTFLCDEC). ANK repeat units follow at residues 132–161 (DLSK…QANF), 166–195 (KGNT…DPGT), and 199–228 (SGKT…ELTD). The segment at 379-422 (QHSVESQDNDQPDYDSVASDEDTDLETTASKTNRQKSLDSDLSD) is disordered. Acidic residues predominate over residues 385–403 (QDNDQPDYDSVASDEDTDL). A phosphoserine mark is found at Ser-394 and Ser-397. The residue at position 401 (Thr-401) is a Phosphothreonine. Phosphoserine is present on residues Ser-415, Ser-418, and Ser-421. Positions 437–478 (LVASEAKIQQLMKVNNNLSDELRIMQKKLQTLQSENSNLRKQ) form a coiled coil. A compositionally biased stretch (polar residues) spans 480–499 (TTNVYQVQTGSEYTDTSNHS). Disordered stretches follow at residues 480–538 (TTNV…EESR) and 554–643 (VTSS…TEDV). Tyr-484 is modified (phosphotyrosine). A compositionally biased stretch (low complexity) spans 555-569 (TSSSSLPSFPSTLSW). Phosphoserine is present on residues Ser-559, Ser-562, and Ser-570. Positions 570 to 583 (SRDESARRASRLEK) are enriched in basic and acidic residues. Over residues 584-597 (QNSTPESDYDNTPN) the composition is skewed to polar residues. Thr-587 is subject to Phosphothreonine. At Ser-614 the chain carries Phosphoserine.

In terms of assembly, may form heterooligomers with GIT1. Directly interacts with protein Piccolo/PCLO. Interacts with PPFIA1 and PPFIA2. Interacts with ARHGEF7. Identified in a complex with ARHGEF6 and BIN2. Interacts with PAK3. Interacts with PXN/paxillin. Interacts with TGFB1I1. Forms a complex with EFNB1 and GRB4/NCK2.

In terms of biological role, GTPase-activating protein for ADP ribosylation factor family members, including ARF1. The sequence is that of ARF GTPase-activating protein GIT2 (GIT2) from Homo sapiens (Human).